Consider the following 440-residue polypeptide: Chitinase-like protein Idgf2 (440 aa).

An N-terminal signal peptide occupies residues 1 to 20 (MKAWIWFTFVACLFAASTEA). In terms of domain architecture, GH18 spans 22–440 (SNLVCYYDSS…PILRAIKYRL (419 aa)). Cys-26 and Cys-53 are joined by a disulfide. N-linked (GlcNAc...) asparagine glycosylation occurs at Asn-220. The cysteines at positions 342 and 425 are disulfide-linked.

This sequence belongs to the glycosyl hydrolase 18 family. IDGF subfamily. Post-translationally, glycosylated. Primarily expressed in yolk cells and fat body. In larvae, it is expressed in the imaginal ring and weakly expressed in imaginal disks. More strongly expressed than Idgf1 and Idgf3.

Its subcellular location is the secreted. Functionally, cooperates with insulin-like peptides to stimulate the proliferation, polarization and motility of imaginal disk cells. May act by stabilizing the binding of insulin-like peptides to its receptor through a simultaneous interaction with both molecules to form a multiprotein signaling complex. The polypeptide is Chitinase-like protein Idgf2 (Idgf2) (Drosophila melanogaster (Fruit fly)).